The chain runs to 344 residues: L-rhamnose-proton symporter (344 aa).

The next 10 membrane-spanning stretches (helical) occupy residues 4–24 (AITM…CFYA), 38–58 (WSVG…ALLL), 68–88 (FSLS…IGNI), 101–121 (MGIG…TPII), 137–157 (TLLG…AGQL), 175–195 (LVLA…MNAA), 214–234 (LPSY…FCFI), 259–279 (VLLS…YAWG), 290–310 (ISWM…GLVL), and 323–343 (VLSL…IGMA).

This sequence belongs to the L-rhamnose transporter (TC 2.A.7.6) family.

The protein localises to the cell inner membrane. The catalysed reaction is L-rhamnopyranose(in) + H(+)(in) = L-rhamnopyranose(out) + H(+)(out). Uptake of L-rhamnose across the cytoplasmic membrane with the concomitant transport of protons into the cell (symport system). The protein is L-rhamnose-proton symporter of Shigella dysenteriae serotype 1 (strain Sd197).